A 108-amino-acid polypeptide reads, in one-letter code: Ig kappa chain V-V region NQ5-89.4 (108 aa).

A framework-1 region spans residues 1 to 23; that stretch reads DIQMTQTTSSLSASLGHRVTITC. A disulfide bridge links Cys-23 with Cys-88. The complementarity-determining-1 stretch occupies residues 24–34; that stretch reads SASQDISNYLN. The tract at residues 35 to 49 is framework-2; sequence WYQQKPDGTVKLLIY. Residues 50 to 56 are complementarity-determining-2; the sequence is YTSRLHS. The segment at 57–88 is framework-3; that stretch reads GVPSRFSGSGSATDYSLTITNLQQEDXATYXC. The segment at 89-97 is complementarity-determining-3; the sequence is QQGNTLPYT. Positions 98 to 107 are framework-4; the sequence is FGGGTKLXIK.

In terms of biological role, anti-2-phenyl oxazolone (PHOX) Antibody. The polypeptide is Ig kappa chain V-V region NQ5-89.4 (Mus musculus (Mouse)).